Here is a 529-residue protein sequence, read N- to C-terminus: Glucocorticoid modulatory element-binding protein 2 (529 aa).

An SAND domain is found at 80 to 162 (EEGENLEAEI…RKIMDSGELD (83 aa)). A Zn(2+)-binding site is contributed by cysteine 109. Residues lysine 135, lysine 139, lysine 142, and arginine 153 each coordinate DNA. Residue lysine 154 forms a Glycyl lysine isopeptide (Lys-Gly) (interchain with G-Cter in SUMO1); alternate linkage. A Glycyl lysine isopeptide (Lys-Gly) (interchain with G-Cter in SUMO2); alternate cross-link involves residue lysine 154. Zn(2+) is bound by residues histidine 166, cysteine 170, and cysteine 174. A coiled-coil region spans residues 244 to 347 (LLDEVIQEFQ…HLSNVLMTLT (104 aa)). Serine 372 carries the phosphoserine modification.

In terms of assembly, homodimer, and heterodimer of GMEB1 and GMEB2. Interacts with the glucocorticoid receptor (NR3C1). May interact with CREB-binding protein (CBP).

The protein localises to the nucleus. It is found in the cytoplasm. Functionally, trans-acting factor that binds to glucocorticoid modulatory elements (GME) present in the TAT (tyrosine aminotransferase) promoter and increases sensitivity to low concentrations of glucocorticoids. Also binds to the transferrin receptor promoter. The sequence is that of Glucocorticoid modulatory element-binding protein 2 (Gmeb2) from Rattus norvegicus (Rat).